The following is a 439-amino-acid chain: Probable tRNA pseudouridine synthase D (439 aa).

The active-site Nucleophile is Asp-87. Residues 166 to 391 (GVPNFFGIQR…SKGLRREILL (226 aa)) enclose the TRUD domain.

It belongs to the pseudouridine synthase TruD family.

It catalyses the reaction uridine(13) in tRNA = pseudouridine(13) in tRNA. Its function is as follows. Could be responsible for synthesis of pseudouridine from uracil-13 in transfer RNAs. In Methanococcoides burtonii (strain DSM 6242 / NBRC 107633 / OCM 468 / ACE-M), this protein is Probable tRNA pseudouridine synthase D.